A 592-amino-acid chain; its full sequence is Potassium-transporting ATPase potassium-binding subunit (592 aa).

Helical transmembrane passes span 7-27 (ILLG…GTYI), 60-80 (LKYA…VYAL), 132-152 (ALAV…IALI), 175-195 (LHVL…QGVI), 279-299 (LSNF…CFTF), 310-330 (WAVL…AMHF), 409-429 (GLYG…LMIG), 449-469 (IAIL…VMLA), 513-533 (VMLG…VLAI), and 556-576 (LFVT…YVPA).

It belongs to the KdpA family. As to quaternary structure, the system is composed of three essential subunits: KdpA, KdpB and KdpC.

Its subcellular location is the cell inner membrane. In terms of biological role, part of the high-affinity ATP-driven potassium transport (or Kdp) system, which catalyzes the hydrolysis of ATP coupled with the electrogenic transport of potassium into the cytoplasm. This subunit binds the periplasmic potassium ions and delivers the ions to the membrane domain of KdpB through an intramembrane tunnel. This is Potassium-transporting ATPase potassium-binding subunit from Dechloromonas aromatica (strain RCB).